Here is a 199-residue protein sequence, read N- to C-terminus: ATP-dependent Clp protease proteolytic subunit 2 (199 aa).

Ser-98 functions as the Nucleophile in the catalytic mechanism. Residue His-123 is part of the active site.

This sequence belongs to the peptidase S14 family. In terms of assembly, fourteen ClpP subunits assemble into 2 heptameric rings which stack back to back to give a disk-like structure with a central cavity, resembling the structure of eukaryotic proteasomes.

It is found in the cytoplasm. It catalyses the reaction Hydrolysis of proteins to small peptides in the presence of ATP and magnesium. alpha-casein is the usual test substrate. In the absence of ATP, only oligopeptides shorter than five residues are hydrolyzed (such as succinyl-Leu-Tyr-|-NHMec, and Leu-Tyr-Leu-|-Tyr-Trp, in which cleavage of the -Tyr-|-Leu- and -Tyr-|-Trp bonds also occurs).. Functionally, cleaves peptides in various proteins in a process that requires ATP hydrolysis. Has a chymotrypsin-like activity. Plays a major role in the degradation of misfolded proteins. This is ATP-dependent Clp protease proteolytic subunit 2 from Corynebacterium efficiens (strain DSM 44549 / YS-314 / AJ 12310 / JCM 11189 / NBRC 100395).